A 335-amino-acid polypeptide reads, in one-letter code: Mitochondrial thiamine diphosphate carrier 1 (335 aa).

A run of 6 helical transmembrane segments spans residues 13 to 29 (KRAV…GAIS), 88 to 105 (VPAL…FAVL), 127 to 150 (YLSY…FDLL), 182 to 199 (LYAG…YAGL), 231 to 247 (SLSS…SGTV), and 304 to 323 (GIVP…FVAY). Solcar repeat units follow at residues 13–111 (KRAV…VKSF), 124–210 (LSPY…FKRW), and 232–329 (LSSF…ASDW).

The protein belongs to the mitochondrial carrier (TC 2.A.29) family.

Its subcellular location is the mitochondrion inner membrane. Mitochondrial transporter that mediates uptake of thiamine diphosphate (ThDP) into mitochondria. The chain is Mitochondrial thiamine diphosphate carrier 1 from Arabidopsis thaliana (Mouse-ear cress).